The primary structure comprises 170 residues: Cytochrome b6-f complex subunit 4 (170 aa).

3 helical membrane-spanning segments follow: residues 46–66 (LLFM…GLSV), 105–125 (LLGI…PFIE), and 141–161 (TVFL…TLPL).

Belongs to the cytochrome b family. PetD subfamily. As to quaternary structure, the 4 large subunits of the cytochrome b6-f complex are cytochrome b6, subunit IV (17 kDa polypeptide, PetD), cytochrome f and the Rieske protein, while the 4 small subunits are PetG, PetL, PetM and PetN. The complex functions as a dimer.

It localises to the cellular thylakoid membrane. Component of the cytochrome b6-f complex, which mediates electron transfer between photosystem II (PSII) and photosystem I (PSI), cyclic electron flow around PSI, and state transitions. The polypeptide is Cytochrome b6-f complex subunit 4 (Synechococcus sp. (strain JA-2-3B'a(2-13)) (Cyanobacteria bacterium Yellowstone B-Prime)).